The sequence spans 204 residues: Ribonuclease HII (204 aa).

In terms of domain architecture, RNase H type-2 spans 14–203 (VGLCGVDEAG…VRLLLDQTSL (190 aa)). Asp20, Glu21, and Asp112 together coordinate a divalent metal cation.

Belongs to the RNase HII family. Mn(2+) serves as cofactor. Requires Mg(2+) as cofactor.

Its subcellular location is the cytoplasm. The catalysed reaction is Endonucleolytic cleavage to 5'-phosphomonoester.. In terms of biological role, endonuclease that specifically degrades the RNA of RNA-DNA hybrids. The protein is Ribonuclease HII of Thiobacillus denitrificans (strain ATCC 25259 / T1).